The primary structure comprises 138 residues: Acidic phospholipase A2 beta (138 aa).

The N-terminal stretch at 1 to 16 (MRTLWIVAVLLLGVEG) is a signal peptide. 7 cysteine pairs are disulfide-bonded: Cys-42-Cys-131, Cys-44-Cys-60, Cys-59-Cys-111, Cys-65-Cys-138, Cys-66-Cys-104, Cys-73-Cys-97, and Cys-91-Cys-102. Ca(2+) is bound by residues Tyr-43, Gly-45, and Gly-47. His-63 is a catalytic residue. Asp-64 contacts Ca(2+). Asp-105 is an active-site residue.

It belongs to the phospholipase A2 family. Group II subfamily. D49 sub-subfamily. As to quaternary structure, dimer. Ca(2+) serves as cofactor. In terms of tissue distribution, expressed by the venom gland.

The protein localises to the secreted. It catalyses the reaction a 1,2-diacyl-sn-glycero-3-phosphocholine + H2O = a 1-acyl-sn-glycero-3-phosphocholine + a fatty acid + H(+). Its function is as follows. PLA2 catalyzes the calcium-dependent hydrolysis of the 2-acyl groups in 3-sn-phosphoglycerides. The polypeptide is Acidic phospholipase A2 beta (Crotalus adamanteus (Eastern diamondback rattlesnake)).